A 287-amino-acid polypeptide reads, in one-letter code: S-methyl-5'-thioadenosine phosphorylase (287 aa).

Phosphate is bound by residues threonine 13 and 55-56; that span reads RH. A substrate-binding site is contributed by methionine 186. Position 187 (threonine 187) interacts with phosphate. 210-212 contributes to the substrate binding site; that stretch reads DYD.

It belongs to the PNP/MTAP phosphorylase family. MTAP subfamily. In terms of assembly, homohexamer. Dimer of a homotrimer.

It catalyses the reaction S-methyl-5'-thioadenosine + phosphate = 5-(methylsulfanyl)-alpha-D-ribose 1-phosphate + adenine. The protein operates within amino-acid biosynthesis; L-methionine biosynthesis via salvage pathway; S-methyl-5-thio-alpha-D-ribose 1-phosphate from S-methyl-5'-thioadenosine (phosphorylase route): step 1/1. Its function is as follows. Catalyzes the reversible phosphorylation of S-methyl-5'-thioadenosine (MTA) to adenine and 5-methylthioribose-1-phosphate. Involved in the breakdown of MTA, a major by-product of polyamine biosynthesis. Responsible for the first step in the methionine salvage pathway after MTA has been generated from S-adenosylmethionine. Has broad substrate specificity with 6-aminopurine nucleosides as preferred substrates. The polypeptide is S-methyl-5'-thioadenosine phosphorylase (Leptospira interrogans serogroup Icterohaemorrhagiae serovar Lai (strain 56601)).